A 206-amino-acid chain; its full sequence is HTH-type transcriptional regulator Hpr (206 aa).

Residues 13-157 (ALLFSQRMAQ…MMCIIRNIYG (145 aa)) form the HTH marR-type domain. Positions 63 to 86 (ISEIAKFGVMHVSTAFNFSKKLEE) form a DNA-binding region, H-T-H motif. A disordered region spans residues 186–206 (SEELEDSADAAEKAAKANQIV).

As to quaternary structure, homodimer.

Negative regulator of protease production and sporulation. This chain is HTH-type transcriptional regulator Hpr, found in Bacillus pumilus (strain SAFR-032).